The following is a 588-amino-acid chain: MTTEGLVVPALSTQQDDSTFEFDKVCSKTVVRSHLGLPNDATDDQVIKRIREYYNISEICNFLKQKVEGHELDMIPKYKHVTLQFPDSLICDSASIVHELQRELGLMPRTEDSSEVKCSADSCCKTGKVESPLSQKLWILADTSYSSCCIDEVAAGHVNSDLVIHFGDACLNVVESLPAAYVFGKPSLKLDSVITQFKEIYANRDSKILIMADAPHTQSLNQLYNILKPEYPNLAYADLYLNPSSNASIIGYDPCPSQSSILNVLNRTIIGLDNGDIDTDIDTILLEHDLFHIEVPAVPRLLQLTTRFQSVTTFEPKSGLASQGPYPKLMRRYRYMHMARSAGTVGLLVNTLSLANTKTLINKIGQKIKEAGKKHYVFVVGKPNVAKLANFENIDIWCVLGCDHQGIIIDENNEYYKPIVTPYELLLALNKDQNWSGKWVTDFNKVLEDMSLEDERNKQEINDGSDNNEEDSDDEAPEFNPVTGQYVSTSKPLRKLHHLQISSQEQHPELDNEGSQDLVKKFSSAVAIKDTVSTSAMHLQTRHWTGLGSDFQQNDSDEEANNEDGALVEDGRAGIARGYDYDRETKFQ.

Positions 149, 170, and 402 each coordinate [4Fe-4S] cluster. Disordered regions lie at residues 454 to 485 (DERN…VTGQ) and 546 to 588 (GLGS…TKFQ). The segment covering 466–477 (DNNEEDSDDEAP) has biased composition (acidic residues). Residues 579-588 (YDYDRETKFQ) are compositionally biased toward basic and acidic residues.

This sequence belongs to the DPH1/DPH2 family. DPH2 subfamily. In terms of assembly, component of the 2-(3-amino-3-carboxypropyl)histidine synthase complex composed of DPH1, DPH2, DPH3 and a NADH-dependent reductase, predominantly CBR1. [4Fe-4S] cluster is required as a cofactor.

Its subcellular location is the cytoplasm. It participates in protein modification; peptidyl-diphthamide biosynthesis. In terms of biological role, required for the first step of diphthamide biosynthesis, a post-translational modification of histidine which occurs in elongation factor 2. DPH1 and DPH2 transfer a 3-amino-3-carboxypropyl (ACP) group from S-adenosyl-L-methionine (SAM) to a histidine residue, the reaction is assisted by a reduction system comprising DPH3 and a NADH-dependent reductase, predominantly CBR1. Facilitates the reduction of the catalytic iron-sulfur cluster found in the DPH1 subunit. This is 2-(3-amino-3-carboxypropyl)histidine synthase subunit 2 (DPH2) from Debaryomyces hansenii (strain ATCC 36239 / CBS 767 / BCRC 21394 / JCM 1990 / NBRC 0083 / IGC 2968) (Yeast).